The chain runs to 431 residues: Glutamate-1-semialdehyde 2,1-aminomutase (431 aa).

Lysine 265 bears the N6-(pyridoxal phosphate)lysine mark.

Belongs to the class-III pyridoxal-phosphate-dependent aminotransferase family. HemL subfamily. Homodimer. The cofactor is pyridoxal 5'-phosphate.

It is found in the cytoplasm. It carries out the reaction (S)-4-amino-5-oxopentanoate = 5-aminolevulinate. Its pathway is porphyrin-containing compound metabolism; protoporphyrin-IX biosynthesis; 5-aminolevulinate from L-glutamyl-tRNA(Glu): step 2/2. In Vibrio vulnificus (strain CMCP6), this protein is Glutamate-1-semialdehyde 2,1-aminomutase.